Here is a 492-residue protein sequence, read N- to C-terminus: Polyamine oxidase 5 (492 aa).

Positions 55, 63, 244, and 431 each coordinate FAD. The short motif at S490–L492 is the Microbody targeting signal element.

Belongs to the flavin monoamine oxidase family. The cofactor is FAD. As to expression, widely expressed.

It localises to the peroxisome. The catalysed reaction is spermine + O2 + H2O = 3-aminopropanal + spermidine + H2O2. It carries out the reaction norspermine + O2 + H2O = norspermidine + 3-aminopropanal + H2O2. It catalyses the reaction thermospermine + O2 + H2O = 3-aminopropanal + spermidine + H2O2. Its pathway is amine and polyamine degradation; spermine degradation. Flavoenzyme involved in polyamine back-conversion. Catalyzes the oxidation of the secondary amino group of polyamines, such as spermine. Substrate preference is spermine &gt; thermospermine &gt; norspermine. No activity detected when putrescine, spermidine or N(1)-acetylspermidine are used as substrates. Plays an important role in the regulation of polyamine intracellular concentration. May play a role in producing hydrogen peroxide during seed germination. The sequence is that of Polyamine oxidase 5 from Oryza sativa subsp. japonica (Rice).